The primary structure comprises 407 residues: Peptidase T (407 aa).

H82 contributes to the Zn(2+) binding site. D84 is an active-site residue. D143 is a Zn(2+) binding site. E177 serves as the catalytic Proton acceptor. 3 residues coordinate Zn(2+): E178, D200, and H382.

This sequence belongs to the peptidase M20B family. The cofactor is Zn(2+).

It is found in the cytoplasm. It catalyses the reaction Release of the N-terminal residue from a tripeptide.. Cleaves the N-terminal amino acid of tripeptides. The sequence is that of Peptidase T from Streptococcus uberis (strain ATCC BAA-854 / 0140J).